The following is a 616-amino-acid chain: MPQLRSRTVTHGRNMAGARALMRASGVASADIGKPIIAVANSFTEFVPGHTHLAPVGRIVSEAIQAAGAVPREFNTIAVDDGIAMGHGGMLYSLPSRDLIADSVEYMVEAHCADALICISNCDKITPGMLMAAMRLNIPTVFVSGGPMEAGKATLVDGTVRKLDLVNAISDAVDESISDEDILRIEENACPTCGSCSGMFTANSMNCLTEVLGLSLPGNGSVLATHTARKALYEDAGRTVVEITKRYYEQDDETVLPRSIGTRAAFDNAMALDIAMGGSTNTILHLLAAAEEAELAYDLDDINEVSRRVPCLSKVAPNVAPGGTYYMEDVHRAGGIPALLGELHRGGLLNEDVHSVHSDTLAEWLKNWDVRGGSPSPEAIELWHAAPGCVRSATAFSQSERWDTLDLDAAGGCIRDVEHAYSKDGGLAVLKGNLAVDGCVVKTAGVDESIWTFEGPAVVCESQDEAVDKILRKEIEPGDVVVIRYEGPRGGPGMQEMLYPTSFLKGRGLGKVCALVTDGRFSGGTSGLSIGHASPEAASGGTIALVEDGDRIRIDIPNRSIELLVDDAELATRREALNGVYAPKNRDRKVSAALRAYAAMATSADRGAVRDVSKLG.

Aspartate 81 provides a ligand contact to Mg(2+). Cysteine 122 is a binding site for [2Fe-2S] cluster. Mg(2+) is bound by residues aspartate 123 and lysine 124. Lysine 124 carries the N6-carboxylysine modification. Cysteine 196 lines the [2Fe-2S] cluster pocket. Residue glutamate 496 coordinates Mg(2+). Serine 522 acts as the Proton acceptor in catalysis.

This sequence belongs to the IlvD/Edd family. In terms of assembly, homodimer. [2Fe-2S] cluster is required as a cofactor. Requires Mg(2+) as cofactor.

The catalysed reaction is (2R)-2,3-dihydroxy-3-methylbutanoate = 3-methyl-2-oxobutanoate + H2O. The enzyme catalyses (2R,3R)-2,3-dihydroxy-3-methylpentanoate = (S)-3-methyl-2-oxopentanoate + H2O. Its pathway is amino-acid biosynthesis; L-isoleucine biosynthesis; L-isoleucine from 2-oxobutanoate: step 3/4. It participates in amino-acid biosynthesis; L-valine biosynthesis; L-valine from pyruvate: step 3/4. In terms of biological role, functions in the biosynthesis of branched-chain amino acids. Catalyzes the dehydration of (2R,3R)-2,3-dihydroxy-3-methylpentanoate (2,3-dihydroxy-3-methylvalerate) into 2-oxo-3-methylpentanoate (2-oxo-3-methylvalerate) and of (2R)-2,3-dihydroxy-3-methylbutanoate (2,3-dihydroxyisovalerate) into 2-oxo-3-methylbutanoate (2-oxoisovalerate), the penultimate precursor to L-isoleucine and L-valine, respectively. The polypeptide is Dihydroxy-acid dehydratase (Streptomyces griseus subsp. griseus (strain JCM 4626 / CBS 651.72 / NBRC 13350 / KCC S-0626 / ISP 5235)).